The sequence spans 338 residues: Fructose-1,6-bisphosphatase 1 (338 aa).

An N-acetylalanine modification is found at Ala-2. Residues 18–22 (VMEEG) and 28–32 (TGEMT) each bind AMP. Residues Asp-69 and Glu-98 each contribute to the Mg(2+) site. 113–114 (KY) is a binding site for AMP. Residues Asp-119, Leu-121, and Asp-122 each coordinate Mg(2+). 122 to 125 (DGSS) contacts substrate. Arg-141 is an AMP binding site. Position 151 is an N6-succinyllysine (Lys-151). Residues 213–216 (NEGY), 244–249 (RYVGSM), Tyr-265, and 275–277 (KLR) contribute to the substrate site. 3 positions are modified to phosphotyrosine: Tyr-216, Tyr-245, and Tyr-265. Glu-281 serves as a coordination point for Mg(2+).

Belongs to the FBPase class 1 family. In terms of assembly, homotetramer. It depends on Mg(2+) as a cofactor.

The enzyme catalyses beta-D-fructose 1,6-bisphosphate + H2O = beta-D-fructose 6-phosphate + phosphate. It functions in the pathway carbohydrate biosynthesis; gluconeogenesis. With respect to regulation, subject to complex allosteric regulation. The enzyme can assume an active R-state, or an inactive T-state. Intermediate conformations may exist. AMP acts as an allosteric inhibitor. AMP binding affects the turnover of bound substrate and not the affinity for substrate. Fructose 2,6-bisphosphate acts as a competitive inhibitor. Fructose 2,6-bisphosphate and AMP have synergistic effects. In terms of biological role, catalyzes the hydrolysis of fructose 1,6-bisphosphate to fructose 6-phosphate in the presence of divalent cations, acting as a rate-limiting enzyme in gluconeogenesis. Plays a role in regulating glucose sensing and insulin secretion of pancreatic beta-cells. Appears to modulate glycerol gluconeogenesis in liver. Important regulator of appetite and adiposity; increased expression of the protein in liver after nutrient excess increases circulating satiety hormones and reduces appetite-stimulating neuropeptides and thus seems to provide a feedback mechanism to limit weight gain. This Oryctolagus cuniculus (Rabbit) protein is Fructose-1,6-bisphosphatase 1 (FBP1).